Consider the following 216-residue polypeptide: Uracil-DNA glycosylase (216 aa).

Aspartate 60 (proton acceptor) is an active-site residue.

This sequence belongs to the uracil-DNA glycosylase (UDG) superfamily. UNG family.

The protein localises to the cytoplasm. It carries out the reaction Hydrolyzes single-stranded DNA or mismatched double-stranded DNA and polynucleotides, releasing free uracil.. Excises uracil residues from the DNA which can arise as a result of misincorporation of dUMP residues by DNA polymerase or due to deamination of cytosine. The chain is Uracil-DNA glycosylase from Psychromonas ingrahamii (strain DSM 17664 / CCUG 51855 / 37).